We begin with the raw amino-acid sequence, 331 residues long: Phosphate acyltransferase (331 aa).

Belongs to the PlsX family. Homodimer. Probably interacts with PlsY.

The protein resides in the cytoplasm. It carries out the reaction a fatty acyl-[ACP] + phosphate = an acyl phosphate + holo-[ACP]. Its pathway is lipid metabolism; phospholipid metabolism. Catalyzes the reversible formation of acyl-phosphate (acyl-PO(4)) from acyl-[acyl-carrier-protein] (acyl-ACP). This enzyme utilizes acyl-ACP as fatty acyl donor, but not acyl-CoA. The polypeptide is Phosphate acyltransferase (Wolinella succinogenes (strain ATCC 29543 / DSM 1740 / CCUG 13145 / JCM 31913 / LMG 7466 / NCTC 11488 / FDC 602W) (Vibrio succinogenes)).